The following is a 169-amino-acid chain: Allophycocyanin subunit beta-18 (169 aa).

At Asn72 the chain carries N4-methylasparagine. Residue Cys82 participates in (2R,3E)-phycocyanobilin binding.

This sequence belongs to the phycobiliprotein family. Heterodimer of ApcE and this beta chain. In terms of processing, contains one covalently linked bilin chromophore. The chromophore is added by phycocyanobilin lyase CpcUS.

It localises to the cellular thylakoid membrane. In terms of biological role, a variant beta-allophycocyanin (AP) which forms a complex with ApcE, a phycobilisome terminal emitter that influences energy transfer to photosystem II. This chain is Allophycocyanin subunit beta-18 (apcF), found in Picosynechococcus sp. (strain ATCC 27264 / PCC 7002 / PR-6) (Agmenellum quadruplicatum).